Here is a 924-residue protein sequence, read N- to C-terminus: Phosphatidate phosphatase LPIN1 (924 aa).

Residues 1-108 (MNYVGQLAGQ…IPMYLATSPI (108 aa)) are N-LIP. Phosphoserine occurs at positions 106 and 150. Disordered regions lie at residues 133 to 248 (PTTA…DCQR) and 269 to 297 (FHASESPSGSRPSTPKSDSELVSKSADRL). Positions 152–161 (GKKRRKRRRK) are enriched in basic residues. A Nuclear localization signal motif is present at residues 153–158 (KKRRKR). A compositionally biased stretch (basic and acidic residues) spans 162–172 (AQLDNLKRDDN). Over residues 176–193 (SEDEDMFPIEMSSDEDTA) the composition is skewed to acidic residues. Composition is skewed to polar residues over residues 218-229 (PSISTHPQSASY) and 273-284 (ESPSGSRPSTPK). Residues serine 285, serine 287, and serine 293 each carry the phosphoserine modification. Residues 285 to 297 (SDSELVSKSADRL) show a composition bias toward basic and acidic residues. Threonine 298 carries the phosphothreonine modification. Disordered regions lie at residues 314–426 (QAAK…SRHL) and 446–490 (LYFP…STSD). At serine 328 the chain carries Phosphoserine. The span at 343–358 (AIHSESSDTFSDQSPT) shows a compositional bias: polar residues. A Phosphoserine modification is found at serine 392. Over residues 404 to 413 (NTAQSSSKTD) the composition is skewed to polar residues. N6-acetyllysine is present on lysine 459. The span at 461–476 (ASDNGARSANQSPQSV) shows a compositional bias: polar residues. A phosphoserine mark is found at serine 468, serine 472, and serine 483. Residues lysine 599 and lysine 629 each participate in a glycyl lysine isopeptide (Lys-Gly) (interchain with G-Cter in SUMO) cross-link. Positions 627 to 649 (RIKHESSSSDEEHAAAKPSGSSH) are disordered. Basic and acidic residues predominate over residues 628–641 (IKHESSSSDEEHAA). Lysine 629 is modified (N6-acetyllysine). Phosphoserine is present on residues serine 634 and serine 635. Residues 658-864 (YKKTLRLTSE…VNPKGELVQE (207 aa)) form a C-LIP region. The DXDXT motif signature appears at 712–716 (DIDGT). Positions 723–727 (LGHIL) match the LXXIL motif motif. A phosphoserine mark is found at serine 921 and serine 923.

Belongs to the lipin family. Interacts (via LXXIL motif) with PPARA. Interacts with PPARGC1A. Interaction with PPARA and PPARGC1A leads to the formation of a complex that modulates gene transcription. Interacts with MEF2C. Mg(2+) is required as a cofactor. Post-translationally, phosphorylated at multiple sites in response to insulin. Phosphorylation is controlled by the mTOR signaling pathway. Phosphorylation is decreased by epinephrine. Phosphorylation may not directly affect the catalytic activity but may regulate the localization. Dephosphorylated by the CTDNEP1-CNEP1R1 complex. In terms of processing, phosphorylated at multiple sites by mTOR in response to insulin, leading to its inactivation. Phosphorylation does not affect the catalytic activity but regulates the localization. Phosphorylation is decreased by epinephrine. Dephosphorylated by the CTDNEP1-CNEP1R1 complex. Dephosphorylation following mTOR inhibition promotes its activity. Sumoylation is important in brain and is marginal in other tissues. Sumoylation facilitates nuclear localization of isoform 2 in neuronals cells and its transcriptional coactivator activity. Post-translationally, acetylation at Lys-459 and Lys-629 by KAT5 in response to fatty acids promotes translocation to the endoplasmic reticulum and synthesis of diacylglycerol. As to expression, specifically expressed in skeletal muscle. Also expressed prominently in adipose tissue, and testis. Lower expression also detected in kidney, lung, brain and liver. Predominant isoform in the liver. In terms of tissue distribution, predominant isoform in the brain.

It localises to the mitochondrion outer membrane. The protein localises to the cytoplasm. Its subcellular location is the nucleus membrane. The protein resides in the nucleus. It is found in the endoplasmic reticulum membrane. It catalyses the reaction a 1,2-diacyl-sn-glycero-3-phosphate + H2O = a 1,2-diacyl-sn-glycerol + phosphate. The catalysed reaction is 1-octadecanoyl-2-(4Z,7Z,10Z,13Z,16Z,19Z-docosahexaenoyl)-sn-glycero-3-phosphate + H2O = 1-octadecanoyl-2-(4Z,7Z,10Z,13Z,16Z,19Z-docosahexaenoyl)-sn-glycerol + phosphate. It carries out the reaction 1-octadecanoyl-2-(5Z,8Z,11Z,14Z-eicosatetraenoyl)-sn-glycero-3-phosphate + H2O = 1-octadecanoyl-2-(5Z,8Z,11Z,14Z-eicosatetraenoyl)-sn-glycerol + phosphate. The enzyme catalyses 1-octadecanoyl-2-(9Z,12Z-octadecadienoyl)-sn-glycero-3-phosphate + H2O = 1-octadecanoyl-2-(9Z,12Z)-octadecadienoyl-sn-glycerol + phosphate. It catalyses the reaction 1-octadecanoyl-2-(9Z-octadecenoyl)-sn-glycero-3-phosphate + H2O = 1-octadecanoyl-2-(9Z-octadecenoyl)-sn-glycerol + phosphate. The catalysed reaction is 1-hexadecanoyl-2-(4Z,7Z,10Z,13Z,16Z,19Z-docosahexaenoyl)-sn-glycero-3-phosphate + H2O = 1-hexadecanoyl-2-(4Z,7Z,10Z,13Z,16Z,19Z-docosahexaenoyl)-sn-glycerol + phosphate. It carries out the reaction 1,2-dioctadecanoyl-sn-glycero-3-phosphate + H2O = 1,2-dioctadecanoyl-sn-glycerol + phosphate. The enzyme catalyses 1-hexadecanoyl-2-(5Z,8Z,11Z,14Z-eicosatetraenoyl)-sn-glycero-3-phosphate + H2O = 1-hexadecanoyl-2-(5Z,8Z,11Z,14Z-eicosatetraenoyl)-sn-glycerol + phosphate. It catalyses the reaction 1-hexadecanoyl-2-(9Z,12Z-octadecadienoyl)-sn-glycero-3-phosphate + H2O = 1-hexadecanoyl-2-(9Z,12Z-octadecadienoyl)-sn-glycerol + phosphate. The catalysed reaction is 1-hexadecanoyl-2-(9Z-octadecenoyl)-sn-glycero-3-phosphate + H2O = 1-hexadecanoyl-2-(9Z-octadecenoyl)-sn-glycerol + phosphate. It carries out the reaction 1,2-di-(4Z,7Z,10Z,13Z,16Z,19Z-docosahexaenoyl)-sn-glycero-3-phosphate + H2O = 1,2-di-(4Z,7Z,10Z,13Z,16Z,19Z-docosahexaenoyl)-sn-glycerol + phosphate. The enzyme catalyses 1,2-di-(5Z,8Z,11Z,14Z)-eicosatetraenoyl-sn-glycero-3-phosphate + H2O = 1,2-di-(5Z,8Z,11Z,14Z)-eicosatetraenoyl-sn-glycerol + phosphate. It catalyses the reaction 1,2-di-(9Z,12Z-octadecadienoyl)-sn-glycero-3-phosphate + H2O = 1,2-di-(9Z,12Z-octadecadienoyl)-sn-glycerol + phosphate. The catalysed reaction is 1,2-di-(9Z-octadecenoyl)-sn-glycero-3-phosphate + H2O = 1,2-di-(9Z-octadecenoyl)-sn-glycerol + phosphate. It carries out the reaction 1,2-dihexadecanoyl-sn-glycero-3-phosphate + H2O = 1,2-dihexadecanoyl-sn-glycerol + phosphate. Inhibited by N-ethylmaleimide treatment. In terms of biological role, acts as a magnesium-dependent phosphatidate phosphatase enzyme which catalyzes the conversion of phosphatidic acid to diacylglycerol during triglyceride, phosphatidylcholine and phosphatidylethanolamine biosynthesis and therefore controls the metabolism of fatty acids at different levels. Is involved in adipocyte differentiation. Also acts as nuclear transcriptional coactivator for PPARGC1A/PPARA regulatory pathway to modulate lipid metabolism gene expression. Recruited at the mitochondrion outer membrane and is involved in mitochondrial fission by converting phosphatidic acid to diacylglycerol. In Mus musculus (Mouse), this protein is Phosphatidate phosphatase LPIN1 (Lpin1).